Reading from the N-terminus, the 231-residue chain is MVGATVVSKWTPLCVASPPERNSASLNPHCSPARVNFRTALAAFRPQFRLFSRNSASRRRLRASSSAESGIFLPHLVASMEDVEETYIMVKPDGIQRGLVGEIISRFEKKGFKLIGLKMFQCPKELAEEHYKDLSAKSFFPNLIEYITSGPVVCMAWEGVGVVASARKLIGKTDPLQAEPGTIRGDLAVQTGRNIVHGSDSPENGKREIGLWFKEGELCKWDSALATWLRE.

The transit peptide at Met1–Arg62 directs the protein to the chloroplast. The ATP site is built by Lys91, Phe139, Arg167, Thr173, Arg184, and Asn194. The Pros-phosphohistidine intermediate role is filled by His197.

The protein belongs to the NDK family. In terms of assembly, interacts with PHYA, MPK3 and MPK6. Mg(2+) serves as cofactor. In terms of processing, autophosphorylated.

The protein localises to the plastid. It is found in the chloroplast. The catalysed reaction is a 2'-deoxyribonucleoside 5'-diphosphate + ATP = a 2'-deoxyribonucleoside 5'-triphosphate + ADP. It carries out the reaction a ribonucleoside 5'-diphosphate + ATP = a ribonucleoside 5'-triphosphate + ADP. Functionally, major role in the synthesis of nucleoside triphosphates other than ATP. The ATP gamma phosphate is transferred to the NDP beta phosphate via a ping-pong mechanism, using a phosphorylated active-site intermediate. May activate MPK3 and MPK6. May be involved in the regulation of cellular redox state and hydrogen peroxide-mediated MAP kinase signaling. The polypeptide is Nucleoside diphosphate kinase II, chloroplastic (NDPK2) (Arabidopsis thaliana (Mouse-ear cress)).